The chain runs to 219 residues: MASLKSIIRQGKQTRSDLKQLRNSGKVPAVVYGYGTKNTSVKVDEVEFIKVIREVGRNGVIDLGVGSKTIKVMVSDYQFDPLKNQITHIDFLAINMSEERTVEVQVQLVGEAVGAKEGGVVEQPLFNLEVTATPENIPETIEVDISELQVNDSLAVSDIKISGDFTIENNPEDSIVTVVPPTDEPSEEEVEAMEGESATEEPEVVDEDKEDDEEENKED.

The interval 176 to 219 is disordered; sequence VTVVPPTDEPSEEEVEAMEGESATEEPEVVDEDKEDDEEENKED. Residues 184–219 show a composition bias toward acidic residues; it reads EPSEEEVEAMEGESATEEPEVVDEDKEDDEEENKED.

The protein belongs to the bacterial ribosomal protein bL25 family. CTC subfamily. Part of the 50S ribosomal subunit; part of the 5S rRNA/L5/L18/L25 subcomplex. Contacts the 5S rRNA. Binds to the 5S rRNA independently of L5 and L18.

This is one of the proteins that binds to the 5S RNA in the ribosome where it forms part of the central protuberance. The polypeptide is Large ribosomal subunit protein bL25 (Staphylococcus epidermidis (strain ATCC 12228 / FDA PCI 1200)).